Reading from the N-terminus, the 249-residue chain is tRNA 2'-phosphotransferase 1 (249 aa).

Met-1 is subject to N-acetylmethionine. Disordered regions lie at residues 1-25 (MNAPGGRRKEGRRTHRPREQDRNVQ) and 220-249 (KPLSLAGDKETETQSGPKLSSRGGRRKIQQ).

The protein belongs to the KptA/TPT1 family.

It catalyses the reaction 2'-phospho-[ligated tRNA] + NAD(+) = mature tRNA + ADP-alpha-D-ribose 1'',2''-cyclic phosphate + nicotinamide. Functionally, catalyzes the last step of tRNA splicing, the transfer of the splice junction 2'-phosphate from ligated tRNA to NAD to produce ADP-ribose 1''-2'' cyclic phosphate. The chain is tRNA 2'-phosphotransferase 1 (Trpt1) from Mus musculus (Mouse).